Consider the following 273-residue polypeptide: Zinc finger protein 80 (273 aa).

2 C2H2-type zinc fingers span residues 49 to 71 and 77 to 99; these read YKCK…QQIH and YECQ…MRIH. Residues 105–127 form a C2H2-type 3; atypical zinc finger; that stretch reads CKCVECGKVFNRRSHLLCYRQIH. 4 consecutive C2H2-type zinc fingers follow at residues 133–155, 161–183, 189–211, and 217–239; these read YECS…RVTH, FGCK…MKIH, CKCS…SMTH, and YECK…TRSH.

It belongs to the krueppel C2H2-type zinc-finger protein family.

The protein localises to the nucleus. Its function is as follows. May be involved in transcriptional regulation. This Homo sapiens (Human) protein is Zinc finger protein 80 (ZNF80).